Reading from the N-terminus, the 912-residue chain is DNA ligase 4 (912 aa).

Residues E276, T277, K278, L279, R283, E336, K350, F372, E432, K437, K454, and K456 each coordinate ATP. Residue K278 is the N6-AMP-lysine intermediate of the active site. Mg(2+) is bound at residue E336. A Mg(2+)-binding site is contributed by E432. The segment at L615 to Y625 is required for catalytic activity. BRCT domains are found at residues K659–M748 and C809–I912.

It belongs to the ATP-dependent DNA ligase family. Interacts with XRCC4; the LIG4-XRCC4 subcomplex has a 1:2 stoichiometry. Component of the core long-range non-homologous end joining (NHEJ) complex (also named DNA-PK complex) composed of PRKDC, LIG4, XRCC4, XRCC6/Ku70, XRCC5/Ku86 and NHEJ1/XLF. Additional component of the NHEJ complex includes PAXX. Following autophosphorylation, PRKDC dissociates from DNA, leading to formation of the short-range NHEJ complex, composed of LIG4, XRCC4, XRCC6/Ku70, XRCC5/Ku86 and NHEJ1/XLF. Mg(2+) is required as a cofactor.

Its subcellular location is the nucleus. The enzyme catalyses ATP + (deoxyribonucleotide)n-3'-hydroxyl + 5'-phospho-(deoxyribonucleotide)m = (deoxyribonucleotide)n+m + AMP + diphosphate.. Its function is as follows. DNA ligase involved in DNA non-homologous end joining (NHEJ); required for double-strand break (DSB) repair and V(D)J recombination. Catalyzes the NHEJ ligation step of the broken DNA during DSB repair by resealing the DNA breaks after the gap filling is completed. Joins single-strand breaks in a double-stranded polydeoxynucleotide in an ATP-dependent reaction. LIG4 is mechanistically flexible: it can ligate nicks as well as compatible DNA overhangs alone, while in the presence of XRCC4, it can ligate ends with 2-nucleotides (nt) microhomology and 1-nt gaps. Forms a subcomplex with XRCC4; the LIG4-XRCC4 subcomplex is responsible for the NHEJ ligation step and XRCC4 enhances the joining activity of LIG4. This Gallus gallus (Chicken) protein is DNA ligase 4.